Reading from the N-terminus, the 567-residue chain is Chaperone ric-8 (567 aa).

Belongs to the synembryn family.

It localises to the cytoplasm. The protein resides in the cell cortex. Chaperone that specifically binds and folds some, but not all, nascent G alpha proteins prior to G protein heterotrimer formation, promoting their stability and activity. Also acts as a guanine nucleotide exchange factor (GEF) for G alpha proteins by stimulating exchange of bound GDP for free GTP. Able to facilitate synaptic transmission in the nervous system probably by activating G(q)-alpha (egl-30). Also able to activate the G(s)-alpha in synaptic signaling network. Plays a key role in asymmetric spindle positioning, a step for asymmetric cell division that generates cell diversity during development by activating G(i)-alpha protein goa-1 and gpa-16 independently of G-protein coupled receptors. While it acts as a GEF for goa-1, it has no GEF activity toward gpa-16. In addition to its GEF activity, it is required for cortical subcellular localization of G-alpha proteins such as gpa-16. Also required for the interaction of goa-1 and gpr-1/2, suggesting that it may act by generating G-alpha proteins free from G-beta-gamma subunits, enabling gpr-1/2 to mediate asymmetric cell division. This is Chaperone ric-8 (ric-8) from Caenorhabditis briggsae.